Reading from the N-terminus, the 253-residue chain is Triosephosphate isomerase (253 aa).

Substrate contacts are provided by asparagine 12 and lysine 14. Histidine 96 functions as the Electrophile in the catalytic mechanism. Glutamate 169 functions as the Proton acceptor in the catalytic mechanism.

This sequence belongs to the triosephosphate isomerase family. Homodimer.

It is found in the cytoplasm. It catalyses the reaction D-glyceraldehyde 3-phosphate = dihydroxyacetone phosphate. It functions in the pathway carbohydrate biosynthesis; gluconeogenesis. The protein operates within carbohydrate degradation; glycolysis; D-glyceraldehyde 3-phosphate from glycerone phosphate: step 1/1. In terms of biological role, antigen to the host M.1 monoclonal antibody. This is Triosephosphate isomerase (TPI) from Schistosoma mansoni (Blood fluke).